Reading from the N-terminus, the 407-residue chain is CCCH-type zinc finger protein oma-1 (407 aa).

Positions Met1–Gln39 are disordered. The span at Asn7 to Glu17 shows a compositional bias: basic and acidic residues. The tract at residues Ile46–Ala80 is required for taf-4 binding. 2 consecutive C3H1-type zinc fingers follow at residues Ser112–Glu140 and Lys154–His182. Phosphothreonine; by mbk-2 and GSK3 is present on Thr239. Residue Ser302 is modified to Phosphoserine; by mbk-2. A Phosphothreonine; by GSK3 modification is found at Thr339.

As to quaternary structure, interacts with taf-4 (via C-terminus). Interacts with ifet-1. Component of a ribonucleoprotein particle complex that interacts with cgh-1 and car-1 in an RNA-dependent manner. Association with many proteins is dependent on the presence of RNA. Phosphorylation by mbk-2 and by gsk-3 are required for its rapid degradation following meiosis II. In terms of tissue distribution, exclusively expressed in the hermaphrodite gonad. Expressed prior to oocyte division. Widely distributed throughout gonadal oocytes from the mitotic stage to the developing diakinesis stage. Expressed in sperm.

Its subcellular location is the cytoplasm. The protein resides in the cytoplasmic granule. It localises to the nucleus. Zinc-finger RNA-binding protein that binds to 5'-UA[AU]-3' motifs in the 3'-UTR of maternal mRNAs to suppress translation in oocytes and embryos. Acts as a ribonucleoprotein particle component that may exert part of its function within cytoplasmic foci of unfertilized oocytes. Acts redundantly with oma-2 to control the temporal expression and distribution of maternal proteins and thereby promote meiotic progression, oocyte maturation, fertilization and embryonic development. Recruits the translational repressor ifet-1 to the 3'-UTR of mei-1 and zif-1 to negatively regulate their translation. By suppressing the translation of the E3 ligase zif-1, may in turn play a role in the stabilization of zif-1 targets such as the maternal transcriptional repressor protein pie-1. Following fertilization, sequesters the transcription initiation factor, taf-4, in the cytoplasm, which prevents its nuclear localization and thus allows for transcriptional suppression in early embryos, but not in oocytes. Also, together with oma-2, is involved in P-granule distribution during embryonic development. This is CCCH-type zinc finger protein oma-1 from Caenorhabditis elegans.